A 99-amino-acid chain; its full sequence is Nucleoid-associated protein EbfC (99 aa).

This sequence belongs to the YbaB/EbfC family. As to quaternary structure, homodimer.

Its subcellular location is the cytoplasm. It localises to the nucleoid. Functionally, binds to DNA and alters its conformation. May be involved in regulation of gene expression, nucleoid organization and DNA protection. The protein is Nucleoid-associated protein EbfC of Borrelia turicatae (strain 91E135).